The sequence spans 843 residues: Protein P (843 aa).

The interval 1-177 is terminal protein domain (TP); the sequence is MPLSYPHFRK…FCGSPYSWEQ (177 aa). Residues 178-346 form a spacer region; that stretch reads ELQHGSTSIN…YCLSHIINLL (169 aa). Disordered regions lie at residues 202–221 and 285–310; these read SGIL…FQQS and TNPS…VPPG. Residues 347–690 are polymerase/reverse transcriptase domain (RT); it reads EDWGPCYEHG…YMNLYPVARQ (344 aa). The Reverse transcriptase domain maps to 357-600; the sequence is QHHIRTPRTP…YTLNFMGYVI (244 aa). Mg(2+)-binding residues include aspartate 429, aspartate 551, and aspartate 552.

The protein belongs to the hepadnaviridae P protein family.

The catalysed reaction is DNA(n) + a 2'-deoxyribonucleoside 5'-triphosphate = DNA(n+1) + diphosphate. The enzyme catalyses Endonucleolytic cleavage to 5'-phosphomonoester.. Its activity is regulated as follows. Activated by host HSP70 and HSP40 in vitro to be able to bind the epsilon loop of the pgRNA. Because deletion of the RNase H region renders the protein partly chaperone-independent, the chaperones may be needed indirectly to relieve occlusion of the RNA-binding site by this domain. Inhibited by several reverse-transcriptase inhibitors: Lamivudine, Adefovir and Entecavir. Functionally, multifunctional enzyme that converts the viral RNA genome into dsDNA in viral cytoplasmic capsids. This enzyme displays a DNA polymerase activity that can copy either DNA or RNA templates, and a ribonuclease H (RNase H) activity that cleaves the RNA strand of RNA-DNA heteroduplexes in a partially processive 3'- to 5'-endonucleasic mode. Neo-synthesized pregenomic RNA (pgRNA) are encapsidated together with the P protein, and reverse-transcribed inside the nucleocapsid. Initiation of reverse-transcription occurs first by binding the epsilon loop on the pgRNA genome, and is initiated by protein priming, thereby the 5'-end of (-)DNA is covalently linked to P protein. Partial (+)DNA is synthesized from the (-)DNA template and generates the relaxed circular DNA (RC-DNA) genome. After budding and infection, the RC-DNA migrates in the nucleus, and is converted into a plasmid-like covalently closed circular DNA (cccDNA). The activity of P protein does not seem to be necessary for cccDNA generation, and is presumably released from (+)DNA by host nuclear DNA repair machinery. The polypeptide is Protein P (Hepatitis B virus genotype F1 (isolate Argentina/sa11/2000) (HBV-F)).